Here is a 481-residue protein sequence, read N- to C-terminus: Alpha-L-arabinofuranosidase 43 (481 aa).

An N-terminal signal peptide occupies residues methionine 1–alanine 19. Asparagine 158, asparagine 176, and asparagine 365 each carry an N-linked (GlcNAc...) asparagine glycan.

Belongs to the glycosyl hydrolase 43 family.

The protein localises to the secreted. The catalysed reaction is Hydrolysis of terminal non-reducing alpha-L-arabinofuranoside residues in alpha-L-arabinosides.. With respect to regulation, activity is significantly inhibited by SDS and partially inhibited by Ag(+), Fe(3+) and beta-mercaptoethanol. Its function is as follows. Alpha-L-arabinofuranosidase specific for the cleavage of alpha-1,3-linkage. Shows high activity against 4-nitrophenyl alpha-L-arabinofuranoside, debranched arabinan, and sugar beet arabinan. The sequence is that of Alpha-L-arabinofuranosidase 43 from Humicola insolens (Soft-rot fungus).